Reading from the N-terminus, the 222-residue chain is Adenylate kinase (222 aa).

10–15 (GAGKGT) serves as a coordination point for ATP. The tract at residues 30-59 (STGDMLRAAVKAGTPLGIEAKKVMDAGGLV) is NMP. AMP-binding positions include threonine 31, arginine 36, 57–59 (GLV), 85–88 (GFPR), and glutamine 92. The interval 122 to 159 (GRRVHVASGRTYHVKYNPPKTEGVDDESGEPLIQRDDD) is LID. ATP is bound by residues arginine 123 and 132–133 (TY). The disordered stretch occupies residues 138–160 (NPPKTEGVDDESGEPLIQRDDDK). Arginine 156 and arginine 167 together coordinate AMP. Glycine 207 serves as a coordination point for ATP.

Belongs to the adenylate kinase family. Monomer.

The protein resides in the cytoplasm. The enzyme catalyses AMP + ATP = 2 ADP. Its pathway is purine metabolism; AMP biosynthesis via salvage pathway; AMP from ADP: step 1/1. In terms of biological role, catalyzes the reversible transfer of the terminal phosphate group between ATP and AMP. Plays an important role in cellular energy homeostasis and in adenine nucleotide metabolism. This is Adenylate kinase from Ralstonia pickettii (strain 12J).